A 479-amino-acid chain; its full sequence is Replication factor C large subunit (479 aa).

Gly43 to Thr50 contacts ATP. The segment at Glu441–Ser479 is disordered. Residues Glu452 to Arg463 are compositionally biased toward basic and acidic residues.

The protein belongs to the activator 1 small subunits family. RfcL subfamily. As to quaternary structure, heteropentamer composed of four small subunits (RfcS) and one large subunit (RfcL). Both subunits interact with PCNA.

Functionally, part of the RFC clamp loader complex which loads the PCNA sliding clamp onto DNA. The complex possesses DNA-dependent ATPase activity which is further stimulated by PCNA. The protein is Replication factor C large subunit (rfcL) of Archaeoglobus fulgidus (strain ATCC 49558 / DSM 4304 / JCM 9628 / NBRC 100126 / VC-16).